The sequence spans 446 residues: MTEQKKKLEKLSGVKGMNDILPQEAGLWEFFETTVKSMLRSYGYQNIRTPIVEHTQLFKRGIGEVTDIVEKEMYSFTDALNGENLTMRPENTAAVVRAAIEHNMLYDGPKRLWYIGPMFRHERPQRGRYRQFHQVGVEALGFAGPDADAEIIMMCQRLWDDLGLMGIKLEINSLGLAEERAAHRVELIAHLEKHMDVLDEEAKRRLYTNPLRVLDTKNPAMQEVAQNAPKLIDFLGEESRAHFEGLQRILKANNIPFTINPRLVRGLDYYNLTVFEWVTDKLGAQGTVAAGGRYDPLIEQLGGKPTAACGWAMGIERILELLKEEQLVPEDEGCDVYVVHQGDAAREQAFIIAERLRDTGLDVILHCSADGQTASFKSQMKRADASGAAFAVVLGEDEIANGTVGVKPLRDTNANGGKNEQQNVPAEDLTEFLINAMVATAEDGDD.

This sequence belongs to the class-II aminoacyl-tRNA synthetase family. Homodimer.

It localises to the cytoplasm. The catalysed reaction is tRNA(His) + L-histidine + ATP = L-histidyl-tRNA(His) + AMP + diphosphate + H(+). The protein is Histidine--tRNA ligase of Paraburkholderia phytofirmans (strain DSM 17436 / LMG 22146 / PsJN) (Burkholderia phytofirmans).